The chain runs to 429 residues: Aspartate--tRNA(Asp/Asn) ligase (429 aa).

Glu166 is an L-aspartate binding site. The segment at 188–191 (QLYK) is aspartate. L-aspartate is bound at residue Arg210. Residues 210–212 (RAE), 218–220 (RHL), and Glu352 contribute to the ATP site. Mg(2+) contacts are provided by Glu352 and Ser355. Positions 355 and 359 each coordinate L-aspartate. Residue 400-403 (GAER) coordinates ATP.

It belongs to the class-II aminoacyl-tRNA synthetase family. Type 2 subfamily. In terms of assembly, homodimer. It depends on Mg(2+) as a cofactor.

Its subcellular location is the cytoplasm. It catalyses the reaction tRNA(Asx) + L-aspartate + ATP = L-aspartyl-tRNA(Asx) + AMP + diphosphate. In terms of biological role, aspartyl-tRNA synthetase with relaxed tRNA specificity since it is able to aspartylate not only its cognate tRNA(Asp) but also tRNA(Asn). Reaction proceeds in two steps: L-aspartate is first activated by ATP to form Asp-AMP and then transferred to the acceptor end of tRNA(Asp/Asn). The protein is Aspartate--tRNA(Asp/Asn) ligase of Methanocorpusculum labreanum (strain ATCC 43576 / DSM 4855 / Z).